The chain runs to 340 residues: Guanine nucleotide-binding protein subunit beta-4 (340 aa).

Position 2 is an N-acetylserine (serine 2). The residue at position 2 (serine 2) is a Phosphoserine. 5 WD repeats span residues 53–92 (GHLAKIYAMHWGYDSRLLVSASQDGKLIIWDSYTTNKMHA), 95–134 (LRSSWVMTCAYAPSGNYVACGGLDNICSIYNLKTREGNVR), 141–179 (GHTGYLSCCRFLDDSQIVTSSGDTTCALWDIETAQQTTT), 182–221 (GHSGDVMSLSLSPDMRTFVSGACDASSKLWDIRDGMCRQS), and 224–263 (GHVSDINAVSFFPNGYAFATGSDDATCRLFDLRADQELLL). A Phosphohistidine modification is found at histidine 266. WD repeat units follow at residues 268-307 (NIICGITSVAFSKSGRLLLAGYDDFNCNVWDTLKGDRAGV) and 310-339 (GHDNRVSCLGVTDDGMAVATGSWDSFLRIW).

This sequence belongs to the WD repeat G protein beta family. G proteins are composed of 3 units, alpha, beta and gamma. In terms of tissue distribution, strongly expressed in lung and placenta, whereas it is weakly expressed in brain and heart. Abundantly expressed in the axons and Schwann cells of peripheral nerves.

In terms of biological role, guanine nucleotide-binding proteins (G proteins) are involved as a modulator or transducer in various transmembrane signaling systems. The beta and gamma chains are required for the GTPase activity, for replacement of GDP by GTP, and for G protein-effector interaction. In Homo sapiens (Human), this protein is Guanine nucleotide-binding protein subunit beta-4 (GNB4).